The following is a 469-amino-acid chain: MTRYEVVFIAIPTLGNLVPQVEFANLLTKHDPRFSATILTVSMPQRPLMNTYVQARASSAANIKLLQLPIVDPPAPEQYQTLVGFLSLHMQNHKHHVKHALLNLMKTTESNSSNSVRLAAIFVDMFSTTLIDVAAELAVPCYLFFASPASCLGFTLDLPRFDLAESKSEFTVPCFKNLLPRSVFPNLVLDAKDGTFWLSYHARRYKETKGIVINTLQELETHALQSLHNDSQLQRVYPIGPILDLVGSAQWDPNPAQYKRIMEWLDQQPLSSVVLLCFGSMGSLEANQVEEIAIGLERAGVRFLWALRESPKAQLEYPRDYENHKDVLPDGFLERTNNIGLVCGWVPQAVVLAHKAVGGFVSHCGWNSILESLWHGVPVATWPLYSEQQMNAFQMVRDLGLAVEISVDYRVGADLVRAEEVENGLRSLMKGGDEIRRKVKEMSDTCRGALLENGSSYSNLVSLIQELTS.

UDP-alpha-D-glucose-binding positions include serine 280, 345–346 (WV), 363–371 (HCGWNSILE), and 385–388 (YSEQ).

It belongs to the UDP-glycosyltransferase family.

With respect to regulation, inhibited by Cu(2+) or Zn(2+). Glycosyltransferase that catalyzes the C-glucosylation of daidzein to puerarin. Shows activity with the isoflavones daidzein and genistein, but has no activity towards flavonoids such as 2-hydroxynaringenin. Can use UDP-glucose, but not UDP-galactose or UDP-glucuronic acid as sugar donor. Does not require bivalent cations for activity. The chain is UDP-glycosyltransferase 43 from Pueraria montana var. lobata (Kudzu vine).